The following is an 822-amino-acid chain: Putative ESX-1 scaffolding and assembly protein SaeB (822 aa).

In terms of biological role, may be involved in assembly of the ESX-1 / type VII specialized secretion system (T7SS), which exports several proteins including EsxA and EsxB. Involved in DNA conjugation in recipient (MDK8) but not donor (mc(2)155) strain. The protein is Putative ESX-1 scaffolding and assembly protein SaeB of Mycolicibacterium smegmatis (strain ATCC 700084 / mc(2)155) (Mycobacterium smegmatis).